A 172-amino-acid polypeptide reads, in one-letter code: MVDKRESYTKEDLLASGRGELFGAKGPQLPAPSMLMMDRVVKMTETGGNFDKGYVEAELDINPELWFFGCHFIGDPVMPGCLGLDAMWQLVGFYLGWLGGEGKGRALGVGEVKFTGQVLPSAKKVTYRIHFKRIVNRRLVMGLADGEVLVDGRVIYTANDLKVGLFQDTSAF.

Residue His-71 is part of the active site.

It belongs to the thioester dehydratase family. FabA subfamily. Homodimer.

The protein resides in the cytoplasm. It carries out the reaction a (3R)-hydroxyacyl-[ACP] = a (2E)-enoyl-[ACP] + H2O. The enzyme catalyses (3R)-hydroxydecanoyl-[ACP] = (2E)-decenoyl-[ACP] + H2O. The catalysed reaction is (2E)-decenoyl-[ACP] = (3Z)-decenoyl-[ACP]. It participates in lipid metabolism; fatty acid biosynthesis. In terms of biological role, necessary for the introduction of cis unsaturation into fatty acids. Catalyzes the dehydration of (3R)-3-hydroxydecanoyl-ACP to E-(2)-decenoyl-ACP and then its isomerization to Z-(3)-decenoyl-ACP. Can catalyze the dehydratase reaction for beta-hydroxyacyl-ACPs with saturated chain lengths up to 16:0, being most active on intermediate chain length. The protein is 3-hydroxydecanoyl-[acyl-carrier-protein] dehydratase of Enterobacter sp. (strain 638).